We begin with the raw amino-acid sequence, 271 residues long: Glutamate racemase (271 aa).

Residues 12–13 (DS) and 44–45 (YG) each bind substrate. Catalysis depends on Cys75, which acts as the Proton donor/acceptor. 76-77 (NT) contacts substrate. Residue Cys185 is the Proton donor/acceptor of the active site. Residue 186-187 (TH) participates in substrate binding.

This sequence belongs to the aspartate/glutamate racemases family.

It catalyses the reaction L-glutamate = D-glutamate. The protein operates within cell wall biogenesis; peptidoglycan biosynthesis. Its function is as follows. Provides the (R)-glutamate required for cell wall biosynthesis. The protein is Glutamate racemase of Methylococcus capsulatus (strain ATCC 33009 / NCIMB 11132 / Bath).